The sequence spans 247 residues: Terpene cyclase ausL (247 aa).

Transmembrane regions (helical) follow at residues 49–69, 75–95, 114–134, 138–158, 171–191, and 206–226; these read AIAV…AWIY, HWQG…AATL, LVLL…CLAL, GALG…SGAV, SLVI…KLCI, and PMCW…PVLY.

This sequence belongs to the paxB family.

Its subcellular location is the membrane. It functions in the pathway secondary metabolite biosynthesis; terpenoid biosynthesis. Functionally, terpene cyclase; part of the gene cluster that mediates the biosynthesis of calidodehydroaustin, a fungal meroterpenoid. The first step of the pathway is the synthesis of 3,5-dimethylorsellinic acid by the polyketide synthase ausA. 3,5-dimethylorsellinic acid is then prenylated by the polyprenyl transferase ausN. Further epoxidation by the FAD-dependent monooxygenase ausM and cyclization by the probable terpene cyclase ausL lead to the formation of protoaustinoid A. Protoaustinoid A is then oxidized to spiro-lactone preaustinoid A3 by the combined action of the FAD-binding monooxygenases ausB and ausC, and the dioxygenase ausE. Acid-catalyzed keto-rearrangement and ring contraction of the tetraketide portion of preaustinoid A3 by ausJ lead to the formation of preaustinoid A4. The aldo-keto reductase ausK, with the help of ausH, is involved in the next step by transforming preaustinoid A4 into isoaustinone which is in turn hydroxylated by the P450 monooxygenase ausI to form austinolide. The cytochrome P450 monooxygenase ausG modifies austinolide to austinol. Austinol is further acetylated to austin by the O-acetyltransferase ausP, which spontaneously changes to dehydroaustin. The cytochrome P450 monooxygenase ausR then converts dehydroaustin is into 7-dehydrodehydroaustin. The hydroxylation catalyzed by ausR permits the O-acetyltransferase ausQ to add an additional acetyl group to the molecule, leading to the formation of acetoxydehydroaustin. The short chain dehydrogenase ausT catalyzes the reduction of the double bond present between carbon atoms 1 and 2 to convert 7-dehydrodehydroaustin into 1,2-dihydro-7-hydroxydehydroaustin. AusQ catalyzes not only an acetylation reaction but also the addition of the PKS ausV diketide product to 1,2-dihydro-7-hydroxydehydroaustin, forming precalidodehydroaustin. Finally, the iron/alpha-ketoglutarate-dependent dioxygenase converts precalidodehydroaustin into calidodehydroaustin. This chain is Terpene cyclase ausL, found in Aspergillus calidoustus.